A 667-amino-acid polypeptide reads, in one-letter code: Probable E3 ubiquitin ligase complex SCF subunit sconB (667 aa).

The interval 1-55 is disordered; the sequence is MNGSGSTAKESLFNPTPRKLGLPEDNTMTPYNGVRSIFDNSSGSRQLTDEHTNQE. One can recognise an F-box domain in the interval 182–228; sequence IDFITALPPEISFKILSYLDTASLCRAAQVSRAWKCLADDDVVWHRM. WD repeat units lie at residues 347–386, 388–426, 428–464, 466–507, 549–593, 594–633, and 636–667; these read GHTN…RTLT, HTSG…STYT, HLGG…TFLL, GHSD…RTFQ, RQEP…CLRT, FFGH…CERT, and GHSG…SFKN. A disordered region spans residues 528–562; sequence DHDAGHEEDSNASVSGDESPLRQEPCSPGASFFEG.

The protein belongs to the WD repeat MET30/SCONB/SCON-2 family. As to quaternary structure, component of the SCF(sconB) E3 ubiquitin ligase complex.

Its pathway is protein modification; protein ubiquitination. In terms of biological role, component of the SCF(sconB) E3 ubiquitin ligase complex involved in the regulation of sulfur metabolite repression, probably by mediating the inactivation or degradation of the metR transcription factor. The protein is Probable E3 ubiquitin ligase complex SCF subunit sconB (sconB) of Talaromyces stipitatus (strain ATCC 10500 / CBS 375.48 / QM 6759 / NRRL 1006) (Penicillium stipitatum).